The primary structure comprises 357 residues: Elongation factor Ts (357 aa).

An involved in Mg(2+) ion dislocation from EF-Tu region spans residues 82–85 (TDFV).

It belongs to the EF-Ts family.

It is found in the cytoplasm. In terms of biological role, associates with the EF-Tu.GDP complex and induces the exchange of GDP to GTP. It remains bound to the aminoacyl-tRNA.EF-Tu.GTP complex up to the GTP hydrolysis stage on the ribosome. This chain is Elongation factor Ts, found in Campylobacter jejuni subsp. jejuni serotype O:6 (strain 81116 / NCTC 11828).